The following is a 42-amino-acid chain: MEEQKMKKIIKAIWNVVIILIVLSIFPIVLMIDVLNVYFGFM.

This is an uncharacterized protein from Escherichia coli (Bacteriophage T4).